A 525-amino-acid chain; its full sequence is Protein-export membrane protein SecD (525 aa).

6 helical membrane passes run 16–36, 368–388, 395–415, 421–441, 466–486, and 488–508; these read VLLL…KGLT, QAII…YFHY, IPVA…AALI, LPSI…QIVI, AFFI…FLLV, and FVGT…IGVL.

Belongs to the SecD/SecF family. SecD subfamily. Part of the protein translocation apparatus. Forms a complex with SecF.

It localises to the cell membrane. Its function is as follows. Involved in protein export. The protein is Protein-export membrane protein SecD of Thermococcus gammatolerans (strain DSM 15229 / JCM 11827 / EJ3).